Reading from the N-terminus, the 563-residue chain is Lipase 1 (563 aa).

The N-terminal stretch at 1–19 (MVSKTFFLAAALNVVGTLA) is a signal peptide. The residue at position 20 (Gln-20) is a Pyrrolidone carboxylic acid. A disulfide bridge links Cys-80 with Cys-124. The Acyl-ester intermediate role is filled by Ser-236. Residues Cys-295 and Cys-307 are joined by a disulfide bond. Asn-302 carries an N-linked (GlcNAc...) asparagine glycan. Residue Glu-373 is the Charge relay system of the active site. Asn-383 carries N-linked (GlcNAc...) asparagine glycosylation. His-482 functions as the Charge relay system in the catalytic mechanism.

Belongs to the type-B carboxylesterase/lipase family. As to quaternary structure, monomer.

Its subcellular location is the secreted. The enzyme catalyses a triacylglycerol + H2O = a diacylglycerol + a fatty acid + H(+). In terms of biological role, hydrolyzes all ester bonds in triglyceride and displays a high affinity for triolein. For unsaturated substrates having long fatty acyl chains (C18:2 cis-9, cis-12 and C18:3 cis-9, cis-12, cis-15) GCL I shows higher specific activity than GCL II, whereas GCL II shows higher specific activity against saturated substrates having short fatty acid chains (C8, C10, C12 and C14). This chain is Lipase 1 (LIP1), found in Geotrichum candidum (Oospora lactis).